Reading from the N-terminus, the 116-residue chain is Large ribosomal subunit protein bL20 (116 aa).

Belongs to the bacterial ribosomal protein bL20 family.

Its function is as follows. Binds directly to 23S ribosomal RNA and is necessary for the in vitro assembly process of the 50S ribosomal subunit. It is not involved in the protein synthesizing functions of that subunit. The sequence is that of Large ribosomal subunit protein bL20 from Helicobacter acinonychis (strain Sheeba).